Consider the following 128-residue polypeptide: Aspartate 1-decarboxylase (128 aa).

Ser-25 functions as the Schiff-base intermediate with substrate; via pyruvic acid in the catalytic mechanism. At Ser-25 the chain carries Pyruvic acid (Ser). Substrate is bound at residue Thr-57. Catalysis depends on Tyr-58, which acts as the Proton donor. 73–75 (GAA) is a substrate binding site.

This sequence belongs to the PanD family. In terms of assembly, heterooctamer of four alpha and four beta subunits. The cofactor is pyruvate. Is synthesized initially as an inactive proenzyme, which is activated by self-cleavage at a specific serine bond to produce a beta-subunit with a hydroxyl group at its C-terminus and an alpha-subunit with a pyruvoyl group at its N-terminus.

Its subcellular location is the cytoplasm. It carries out the reaction L-aspartate + H(+) = beta-alanine + CO2. It functions in the pathway cofactor biosynthesis; (R)-pantothenate biosynthesis; beta-alanine from L-aspartate: step 1/1. Its function is as follows. Catalyzes the pyruvoyl-dependent decarboxylation of aspartate to produce beta-alanine. In Chlorobium phaeovibrioides (strain DSM 265 / 1930) (Prosthecochloris vibrioformis (strain DSM 265)), this protein is Aspartate 1-decarboxylase.